Reading from the N-terminus, the 362-residue chain is MADCSLRPHVHWAQRHRELYLRVELSDVKNPDVSIADNVLRFRAQGHGAKGDNIYEFQIEFLEPVEPKPVCRVTQRQLNITVQKKESSWWERLTKQEKRPLFLAPDFDRWLDESDAEMELKEKEEEKINKMKIESRVPKDPFKHLKKGYLIMYNLVQFLGFSWIFVNMTVRLFILGKDSFYDTFHTIADMMYFCQTLALMEILNSLIGLVRSPLIPAVIQVFGRNFILFVVLGSLEEMQSKAVVFFLFYFWSIIELFRYPYYMLSCMGIEWKPLTWLRYTSWIPLYPLGGLAEAVCLIQSIPIFSETGKFSLGLPNPLNVTIQFSFLLQMYLIALFLGLFVNFRYLYKQRKQHLGPKKRKMK.

The Cytoplasmic segment spans residues 1-149 (MADCSLRPHV…DPFKHLKKGY (149 aa)). Positions 5-94 (SLRPHVHWAQ…KESSWWERLT (90 aa)) constitute a CS domain. The stretch at 111 to 135 (LDESDAEMELKEKEEEKINKMKIES) forms a coiled coil. The chain crosses the membrane as a helical span at residues 150–170 (LIMYNLVQFLGFSWIFVNMTV). Over 171–189 (RLFILGKDSFYDTFHTIAD) the chain is Lumenal. A helical transmembrane segment spans residues 190–210 (MMYFCQTLALMEILNSLIGLV). Topologically, residues 211–212 (RS) are cytoplasmic. A helical membrane pass occupies residues 213 to 233 (PLIPAVIQVFGRNFILFVVLG). The Lumenal portion of the chain corresponds to 234–242 (SLEEMQSKA). Residues 243-263 (VVFFLFYFWSIIELFRYPYYM) form a helical membrane-spanning segment. The Cytoplasmic portion of the chain corresponds to 264-282 (LSCMGIEWKPLTWLRYTSW). A helical membrane pass occupies residues 283–303 (IPLYPLGGLAEAVCLIQSIPI). Catalysis depends on residues Tyr-286 and Glu-293. Residues 304 to 319 (FSETGKFSLGLPNPLN) are Lumenal-facing. A helical membrane pass occupies residues 320 to 340 (VTIQFSFLLQMYLIALFLGLF). At 341–362 (VNFRYLYKQRKQHLGPKKRKMK) the chain is on the cytoplasmic side.

The protein belongs to the very long-chain fatty acids dehydratase HACD family.

It localises to the endoplasmic reticulum membrane. It catalyses the reaction a very-long-chain (3R)-3-hydroxyacyl-CoA = a very-long-chain (2E)-enoyl-CoA + H2O. The enzyme catalyses (3R)-hydroxyhexadecanoyl-CoA = (2E)-hexadecenoyl-CoA + H2O. Its pathway is lipid metabolism; fatty acid biosynthesis. Catalyzes the third of the four reactions of the long-chain fatty acids elongation cycle. This endoplasmic reticulum-bound enzymatic process, allows the addition of two carbons to the chain of long- and very long-chain fatty acids/VLCFAs per cycle. This enzyme catalyzes the dehydration of the 3-hydroxyacyl-CoA intermediate into trans-2,3-enoyl-CoA, within each cycle of fatty acid elongation. Thereby, it participates in the production of VLCFAs of different chain lengths that are involved in multiple biological processes as precursors of membrane lipids and lipid mediators. Involved in Rac1-signaling pathways leading to the modulation of gene expression. The protein is Very-long-chain (3R)-3-hydroxyacyl-CoA dehydratase of Gallus gallus (Chicken).